Here is a 485-residue protein sequence, read N- to C-terminus: N-succinylglutamate 5-semialdehyde dehydrogenase (485 aa).

An NAD(+)-binding site is contributed by 220–225 (GSANTG). Catalysis depends on residues E243 and C278.

It belongs to the aldehyde dehydrogenase family. AstD subfamily.

The enzyme catalyses N-succinyl-L-glutamate 5-semialdehyde + NAD(+) + H2O = N-succinyl-L-glutamate + NADH + 2 H(+). It participates in amino-acid degradation; L-arginine degradation via AST pathway; L-glutamate and succinate from L-arginine: step 4/5. In terms of biological role, catalyzes the NAD-dependent reduction of succinylglutamate semialdehyde into succinylglutamate. The protein is N-succinylglutamate 5-semialdehyde dehydrogenase of Aliivibrio fischeri (strain ATCC 700601 / ES114) (Vibrio fischeri).